We begin with the raw amino-acid sequence, 141 residues long: Large ribosomal subunit protein bL17 (141 aa).

The tract at residues 120–141 (TSAKGQDSGPVLTADEDEFEAA) is disordered.

This sequence belongs to the bacterial ribosomal protein bL17 family. As to quaternary structure, part of the 50S ribosomal subunit. Contacts protein L32.

This Novosphingobium aromaticivorans (strain ATCC 700278 / DSM 12444 / CCUG 56034 / CIP 105152 / NBRC 16084 / F199) protein is Large ribosomal subunit protein bL17.